Reading from the N-terminus, the 258-residue chain is 4-hydroxy-tetrahydrodipicolinate reductase (258 aa).

Residues 8-13 (GVTGRM), 93-95 (GTT), and 117-120 (AANF) each bind NAD(+). His-149 (proton donor/acceptor) is an active-site residue. Residue His-150 participates in (S)-2,3,4,5-tetrahydrodipicolinate binding. The active-site Proton donor is the Lys-153. (S)-2,3,4,5-tetrahydrodipicolinate is bound at residue 159–160 (GT).

The protein belongs to the DapB family.

It is found in the cytoplasm. The catalysed reaction is (S)-2,3,4,5-tetrahydrodipicolinate + NAD(+) + H2O = (2S,4S)-4-hydroxy-2,3,4,5-tetrahydrodipicolinate + NADH + H(+). The enzyme catalyses (S)-2,3,4,5-tetrahydrodipicolinate + NADP(+) + H2O = (2S,4S)-4-hydroxy-2,3,4,5-tetrahydrodipicolinate + NADPH + H(+). It functions in the pathway amino-acid biosynthesis; L-lysine biosynthesis via DAP pathway; (S)-tetrahydrodipicolinate from L-aspartate: step 4/4. In terms of biological role, catalyzes the conversion of 4-hydroxy-tetrahydrodipicolinate (HTPA) to tetrahydrodipicolinate. The protein is 4-hydroxy-tetrahydrodipicolinate reductase of Thermomicrobium roseum (strain ATCC 27502 / DSM 5159 / P-2).